A 502-amino-acid chain; its full sequence is Probable cytosol aminopeptidase (502 aa).

Mn(2+)-binding residues include K254 and D259. K266 is an active-site residue. Mn(2+) contacts are provided by D277, D336, and E338. R340 is an active-site residue.

It belongs to the peptidase M17 family. It depends on Mn(2+) as a cofactor.

The protein resides in the cytoplasm. The enzyme catalyses Release of an N-terminal amino acid, Xaa-|-Yaa-, in which Xaa is preferably Leu, but may be other amino acids including Pro although not Arg or Lys, and Yaa may be Pro. Amino acid amides and methyl esters are also readily hydrolyzed, but rates on arylamides are exceedingly low.. The catalysed reaction is Release of an N-terminal amino acid, preferentially leucine, but not glutamic or aspartic acids.. Its function is as follows. Presumably involved in the processing and regular turnover of intracellular proteins. Catalyzes the removal of unsubstituted N-terminal amino acids from various peptides. This is Probable cytosol aminopeptidase from Tropheryma whipplei (strain TW08/27) (Whipple's bacillus).